The sequence spans 493 residues: Cytochrome P450 2A9 (493 aa).

Position 438 (cysteine 438) interacts with heme.

The protein belongs to the cytochrome P450 family. Heme is required as a cofactor. In terms of tissue distribution, liver.

The protein localises to the endoplasmic reticulum membrane. Its subcellular location is the microsome membrane. The catalysed reaction is an organic molecule + reduced [NADPH--hemoprotein reductase] + O2 = an alcohol + oxidized [NADPH--hemoprotein reductase] + H2O + H(+). In terms of biological role, cytochromes P450 are a group of heme-thiolate monooxygenases. In liver microsomes, this enzyme is involved in an NADPH-dependent electron transport pathway. It oxidizes a variety of structurally unrelated compounds, including steroids, fatty acids, and xenobiotics. The polypeptide is Cytochrome P450 2A9 (CYP2A9) (Mesocricetus auratus (Golden hamster)).